The following is a 529-amino-acid chain: Transcription factor kayak (529 aa).

Over residues 118 to 134 (LQGTDSDNSNASWADAQ) the composition is skewed to polar residues. Disordered regions lie at residues 118–166 (LQGT…SVNG) and 180–239 (NAGR…CRKR). Low complexity-rich tracts occupy residues 142–153 (TDTSSAHTDSTS) and 182–201 (GRGS…TPAR). Residues 219–282 (EEKRRIRRER…NQLEFFLRAH (64 aa)) form the bZIP domain. The tract at residues 221–240 (KRRIRRERNKQAAARCRKRR) is basic motif. The segment at 247 to 275 (LTYEVEQLEKKRDGLKKEMETLTDVKNQL) is leucine-zipper. Disordered stretches follow at residues 311-390 (AGSC…PMST) and 493-529 (DGGT…LVSL). The span at 315-332 (DSGSSSHHNNNSNDSSNG) shows a compositional bias: low complexity. The span at 340-350 (SLNSTGRSNSP) shows a compositional bias: polar residues. At S349 the chain carries Phosphoserine. Positions 363–375 (DGGLDSSCLLDQD) are enriched in low complexity. Positions 376-387 (GPPPSKRFPLPP) are enriched in pro residues.

The protein belongs to the bZIP family. Fos subfamily. Homodimer. Heterodimer with Jra. The kay-Jra heterodimer binds more stably to the AP-1 site than either of the two proteins alone.

It localises to the nucleus. In terms of biological role, developmentally regulated transcription factor AP-1 binds and recognizes the enhancer DNA sequence: 5'-TGA[CG]TCA-3'. May play a role in the function or determination of a particular subset of cells in the developing embryo. Is able to carry out its function either independently of or in conjunction with Jra. The polypeptide is Transcription factor kayak (Drosophila ananassae (Fruit fly)).